Reading from the N-terminus, the 99-residue chain is HssA/B-like protein 42 (99 aa).

Residues 1–29 are disordered; that stretch reads MTLFSSISSMSTSMSGSKSSISSFGSGTS.

This sequence belongs to the hssA/B family.

This Dictyostelium discoideum (Social amoeba) protein is HssA/B-like protein 42 (hssl42).